A 326-amino-acid chain; its full sequence is Beta-ketoacyl-[acyl-carrier-protein] synthase III (326 aa).

Catalysis depends on residues Cys113 and His253. Positions 254 to 258 are ACP-binding; the sequence is QANIR. Asn283 is a catalytic residue.

It belongs to the thiolase-like superfamily. FabH family. In terms of assembly, homodimer.

It localises to the cytoplasm. The catalysed reaction is malonyl-[ACP] + acetyl-CoA + H(+) = 3-oxobutanoyl-[ACP] + CO2 + CoA. It participates in lipid metabolism; fatty acid biosynthesis. Catalyzes the condensation reaction of fatty acid synthesis by the addition to an acyl acceptor of two carbons from malonyl-ACP. Catalyzes the first condensation reaction which initiates fatty acid synthesis and may therefore play a role in governing the total rate of fatty acid production. Possesses both acetoacetyl-ACP synthase and acetyl transacylase activities. Its substrate specificity determines the biosynthesis of branched-chain and/or straight-chain of fatty acids. In Wolbachia sp. subsp. Brugia malayi (strain TRS), this protein is Beta-ketoacyl-[acyl-carrier-protein] synthase III.